The primary structure comprises 333 residues: Adenosine deaminase (333 aa).

Zn(2+)-binding residues include His12 and His14. 3 residues coordinate substrate: His14, Asp16, and Gly170. Zn(2+) is bound at residue His197. Glu200 (proton donor) is an active-site residue. A Zn(2+)-binding site is contributed by Asp278. Asp279 serves as a coordination point for substrate.

The protein belongs to the metallo-dependent hydrolases superfamily. Adenosine and AMP deaminases family. Adenosine deaminase subfamily. Zn(2+) serves as cofactor.

The enzyme catalyses adenosine + H2O + H(+) = inosine + NH4(+). It carries out the reaction 2'-deoxyadenosine + H2O + H(+) = 2'-deoxyinosine + NH4(+). In terms of biological role, catalyzes the hydrolytic deamination of adenosine and 2-deoxyadenosine. This Salmonella typhi protein is Adenosine deaminase.